The following is a 285-amino-acid chain: Diaminopimelate epimerase 2 (285 aa).

Substrate-binding positions include asparagine 11, asparagine 63, glycine 73–asparagine 74, asparagine 158, asparagine 191, glutamate 209–arginine 210, and glycine 219–serine 220.

This sequence belongs to the diaminopimelate epimerase family. In terms of assembly, homodimer.

It localises to the cytoplasm. The enzyme catalyses (2S,6S)-2,6-diaminopimelate = meso-2,6-diaminopimelate. It functions in the pathway amino-acid biosynthesis; L-lysine biosynthesis via DAP pathway; DL-2,6-diaminopimelate from LL-2,6-diaminopimelate: step 1/1. Functionally, catalyzes the stereoinversion of LL-2,6-diaminopimelate (L,L-DAP) to meso-diaminopimelate (meso-DAP), a precursor of L-lysine and an essential component of the bacterial peptidoglycan. This is Diaminopimelate epimerase 2 from Nostoc sp. (strain PCC 7120 / SAG 25.82 / UTEX 2576).